A 257-amino-acid polypeptide reads, in one-letter code: Pyrroline-5-carboxylate reductase (257 aa).

It belongs to the pyrroline-5-carboxylate reductase family.

Its subcellular location is the cytoplasm. It catalyses the reaction L-proline + NADP(+) = (S)-1-pyrroline-5-carboxylate + NADPH + 2 H(+). The catalysed reaction is L-proline + NAD(+) = (S)-1-pyrroline-5-carboxylate + NADH + 2 H(+). It participates in amino-acid biosynthesis; L-proline biosynthesis; L-proline from L-glutamate 5-semialdehyde: step 1/1. In terms of biological role, catalyzes the reduction of 1-pyrroline-5-carboxylate (PCA) to L-proline. The polypeptide is Pyrroline-5-carboxylate reductase (Helicobacter pylori (strain ATCC 700392 / 26695) (Campylobacter pylori)).